The chain runs to 204 residues: Small ribosomal subunit protein uS4 (204 aa).

The interval 20 to 46 is disordered; it reads WGRPKSPINKREYGPGEHGQRRRKPSD. Residues 28-38 show a composition bias toward basic and acidic residues; the sequence is NKREYGPGEHG. The S4 RNA-binding domain maps to 93 to 156; it reads TRLDAVVYRM…RQMPLILEAL (64 aa).

Belongs to the universal ribosomal protein uS4 family. Part of the 30S ribosomal subunit. Contacts protein S5. The interaction surface between S4 and S5 is involved in control of translational fidelity.

Functionally, one of the primary rRNA binding proteins, it binds directly to 16S rRNA where it nucleates assembly of the body of the 30S subunit. Its function is as follows. With S5 and S12 plays an important role in translational accuracy. The chain is Small ribosomal subunit protein uS4 from Rhodospirillum rubrum (strain ATCC 11170 / ATH 1.1.1 / DSM 467 / LMG 4362 / NCIMB 8255 / S1).